The sequence spans 203 residues: Bone marrow stromal antigen 2 (203 aa).

Residues 1–26 (MAPTFYHYHPLPMDQKEPGCGIRWRC) are Cytoplasmic-facing. The helical; Signal-anchor for type II membrane protein transmembrane segment at 27 to 47 (LAAASVLILVALVIPLIIFAV) threads the bilayer. The Extracellular segment spans residues 48-183 (KANSEACRDG…EASITSKQNS (136 aa)). N-linked (GlcNAc...) asparagine glycosylation is found at asparagine 66 and asparagine 93. A coiled-coil region spans residues 66 to 178 (NTTRLLQRQL…LRTAEEASIT (113 aa)). Residue serine 183 is the site of GPI-anchor amidated serine attachment. Positions 184-203 (AGSMAVSSLLVLAVPLFLLF) are cleaved as a propeptide — removed in mature form.

As to quaternary structure, parallel homodimer; disulfide-linked. May form homotetramers under reducing conditions. Isoform 1 and isoform 2 form homodimers and also heterodimers with each other. Dimerization is essential for its antiviral activity. Interacts (via cytoplasmic domain) with ARHGAP44. Interacts with MMP14 (via C-terminal cytoplasmic tail). Interacts with LILRA4/ILT7. Interacts with RNF115. In terms of processing, the GPI anchor is essential for its antiviral activity.

The protein localises to the golgi apparatus. It is found in the trans-Golgi network. The protein resides in the cell membrane. Its subcellular location is the late endosome. It localises to the membrane raft. The protein localises to the cytoplasm. It is found in the apical cell membrane. Functionally, IFN-induced antiviral host restriction factor which efficiently blocks the release of diverse mammalian enveloped viruses by directly tethering nascent virions to the membranes of infected cells. Acts as a direct physical tether, holding virions to the cell membrane and linking virions to each other. The tethered virions can be internalized by endocytosis and subsequently degraded or they can remain on the cell surface. In either case, their spread as cell-free virions is restricted. Its target viruses belong to diverse families, including retroviridae: human immunodeficiency virus type 1 (HIV-1), mouse mammary tumor virus (MMTV) and murine leukemia virus (MLV), filoviridae: ebola virus (EBOV), arenaviridae: lassa virus (LASV), and rhabdoviridae: vesicular stomatitis virus (VSV). Can inhibit cell surface proteolytic activity of MMP14 causing decreased activation of MMP15 which results in inhibition of cell growth and migration. Can stimulate signaling by LILRA4/ILT7 and consequently provide negative feedback to the production of IFN by plasmacytoid dendritic cells in response to viral infection. Plays a role in the organization of the subapical actin cytoskeleton in polarized epithelial cells. In Cricetulus griseus (Chinese hamster), this protein is Bone marrow stromal antigen 2 (Bst2).